We begin with the raw amino-acid sequence, 287 residues long: Seed leukoagglutinin (287 aa).

The signal sequence occupies residues 1–29 (MATSNSKPTQVLLATFLTFFFLLLNNVNS). Tyrosine 74 is a binding site for N-acetyl-alpha-neuraminyl-(2-&gt;3)-beta-D-galactosyl-(1-&gt;4)-beta-D-glucose. Asparagine 90 is a glycosylation site (N-linked (GlcNAc...) (paucimannose) asparagine). Aspartate 116, serine 133, and lysine 136 together coordinate N-acetyl-alpha-neuraminyl-(2-&gt;3)-beta-D-galactosyl-(1-&gt;4)-beta-D-glucose. Residue asparagine 142 is glycosylated (N-linked (GlcNAc...) (paucimannose) asparagine). Glutamate 156 and aspartate 158 together coordinate Mn(2+). Aspartate 158, tyrosine 160, aspartate 166, and aspartate 169 together coordinate Ca(2+). Tyrosine 160 and aspartate 166 together coordinate N-acetyl-alpha-neuraminyl-(2-&gt;3)-beta-D-galactosyl-(1-&gt;4)-beta-D-glucose. The Mn(2+) site is built by aspartate 169 and histidine 174. N-linked (GlcNAc...) (high mannose) asparagine; partial glycosylation occurs at asparagine 208. Asparagine 220 carries N-linked (GlcNAc...) (paucimannose) asparagine; partial glycosylation. Glutamate 253 contacts N-acetyl-alpha-neuraminyl-(2-&gt;3)-beta-D-galactosyl-(1-&gt;4)-beta-D-glucose. Residues 279 to 287 (NVHIARYTA) constitute a propeptide, removed in mature form.

The protein belongs to the leguminous lectin family. Homodimer; disulfide-linked. Dimer of homodimers. Post-translationally, the glycosylation on N-90 is determined to by of the high mannose type in PubMed:26003537, while PubMed:27720757 found a paucimannose at this position. Processed at its C-terminus.

In terms of biological role, sialic acid-binding lectin recognizing oligosaccharides containing terminal sialic acid linked via alpha-2,3 bond to penultimate galactose residues. Binds the trisaccharide sequence Neu5Ac-alpha-2,3-Gal-beta-1,4-GlcNAc. Binds fetuin when fully glycosylated but not when the high mannose-type glycans are removed, although the secondary structure is virtually unaffected by deglycosylation of the high mannose-type glycans. The lectin activity may depend on the presence of a single GlcNAc attached to N-90. This is Seed leukoagglutinin from Maackia amurensis (Amur maackia).